A 161-amino-acid polypeptide reads, in one-letter code: Phosphopantetheine adenylyltransferase (161 aa).

Position 9 (Thr-9) interacts with substrate. Residues 9 to 10 and His-17 contribute to the ATP site; that span reads TF. Residues Lys-41, Leu-73, and Arg-87 each contribute to the substrate site. ATP-binding positions include 88-90, Glu-98, and 123-129; these read GLR and YQFISGT.

The protein belongs to the bacterial CoaD family. Homohexamer. The cofactor is Mg(2+).

Its subcellular location is the cytoplasm. It catalyses the reaction (R)-4'-phosphopantetheine + ATP + H(+) = 3'-dephospho-CoA + diphosphate. The protein operates within cofactor biosynthesis; coenzyme A biosynthesis; CoA from (R)-pantothenate: step 4/5. Functionally, reversibly transfers an adenylyl group from ATP to 4'-phosphopantetheine, yielding dephospho-CoA (dPCoA) and pyrophosphate. The chain is Phosphopantetheine adenylyltransferase from Cupriavidus pinatubonensis (strain JMP 134 / LMG 1197) (Cupriavidus necator (strain JMP 134)).